A 653-amino-acid polypeptide reads, in one-letter code: Chromosomal replication initiator protein DnaA (653 aa).

The segment at 1-100 (MADVPADLAA…SAGEPPASAS (100 aa)) is domain I, interacts with DnaA modulators. Residues 86–310 (ITVDDSAGEP…PAPATGPGEP (225 aa)) form a disordered region. The tract at residues 101 to 312 (PAPPRYEEPE…PATGPGEPTA (212 aa)) is domain II. 2 stretches are compositionally biased toward basic and acidic residues: residues 120-150 (DPYESRGREGYEGYGRHRADDHRQGHNDRHQ) and 221-267 (PSYD…RRNI). Over residues 284–310 (GSALPASSGAPGPLAAQPAPATGPGEP) the composition is skewed to low complexity. Positions 313 to 529 (RLNPKYLFDT…GALIRVTAFA (217 aa)) are domain III, AAA+ region. Residues G357, G359, K360, and T361 each contribute to the ATP site. Residues 530–653 (SLNRQPVDLG…TELTNRIKNG (124 aa)) are domain IV, binds dsDNA.

It belongs to the DnaA family. In terms of assembly, oligomerizes as a right-handed, spiral filament on DNA at oriC.

The protein resides in the cytoplasm. Plays an essential role in the initiation and regulation of chromosomal replication. ATP-DnaA binds to the origin of replication (oriC) to initiate formation of the DNA replication initiation complex once per cell cycle. Binds the DnaA box (a 9 base pair repeat at the origin) and separates the double-stranded (ds)DNA. Forms a right-handed helical filament on oriC DNA; dsDNA binds to the exterior of the filament while single-stranded (ss)DNA is stabiized in the filament's interior. The ATP-DnaA-oriC complex binds and stabilizes one strand of the AT-rich DNA unwinding element (DUE), permitting loading of DNA polymerase. After initiation quickly degrades to an ADP-DnaA complex that is not apt for DNA replication. Binds acidic phospholipids. In Streptomyces avermitilis (strain ATCC 31267 / DSM 46492 / JCM 5070 / NBRC 14893 / NCIMB 12804 / NRRL 8165 / MA-4680), this protein is Chromosomal replication initiator protein DnaA.